Reading from the N-terminus, the 956-residue chain is Pyruvate, phosphate dikinase, chloroplastic (956 aa).

The N-terminal 79 residues, 1–79 (MMSSLFVEGM…AVLNPVSPPV (79 aa)), are a transit peptide targeting the chloroplast. Position 536 is a phosphothreonine; by PDRP1 (T536). Residue H538 is the Tele-phosphohistidine intermediate of the active site. Substrate-binding residues include R644, R701, E830, G851, T852, N853, and D854. Residue E830 coordinates Mg(2+). Residue D854 coordinates Mg(2+). C916 serves as the catalytic Proton donor.

This sequence belongs to the PEP-utilizing enzyme family. In terms of assembly, homotetramer. It depends on Mg(2+) as a cofactor. In terms of processing, phosphorylation of Thr-536 in the dark inactivates the enzyme. Dephosphorylation upon light stimulation reactivates the enzyme.

It is found in the plastid. Its subcellular location is the chloroplast. The enzyme catalyses pyruvate + phosphate + ATP = phosphoenolpyruvate + AMP + diphosphate + H(+). With respect to regulation, activated by light-induced dephosphorylation. Inhibited by dark-induced phosphorylation. Both reactions are catalyzed by PDRP1. Its function is as follows. Formation of phosphoenolpyruvate. In Flaveria pringlei, this protein is Pyruvate, phosphate dikinase, chloroplastic (PPDK).